The following is a 32-amino-acid chain: Putative leucine-rich repeat protein PS14 (32 aa).

This chain is Putative leucine-rich repeat protein PS14, found in Pinus strobus (Eastern white pine).